Here is a 59-residue protein sequence, read N- to C-terminus: Large ribosomal subunit protein uL30 (59 aa).

Belongs to the universal ribosomal protein uL30 family. In terms of assembly, part of the 50S ribosomal subunit.

The polypeptide is Large ribosomal subunit protein uL30 (Geobacter sulfurreducens (strain ATCC 51573 / DSM 12127 / PCA)).